Here is an 84-residue protein sequence, read N- to C-terminus: Large ribosomal subunit protein bL27 (84 aa).

Residues 1–22 (MAHKKAGGSTRNGRDSESKRLG) are disordered.

Belongs to the bacterial ribosomal protein bL27 family.

The protein is Large ribosomal subunit protein bL27 of Shewanella frigidimarina (strain NCIMB 400).